The primary structure comprises 231 residues: Ion-translocating oxidoreductase complex subunit E (231 aa).

Transmembrane regions (helical) follow at residues 18 to 38 (GLVQ…VTNA), 39 to 59 (LGLG…VSLV), 69 to 89 (IPVF…LINA), 93 to 113 (GLYL…VIIG), 128 to 148 (AFDG…LGAG), and 182 to 202 (PFLL…LIAG).

Belongs to the NqrDE/RnfAE family. As to quaternary structure, the complex is composed of six subunits: RnfA, RnfB, RnfC, RnfD, RnfE and RnfG.

Its subcellular location is the cell inner membrane. Part of a membrane-bound complex that couples electron transfer with translocation of ions across the membrane. This is Ion-translocating oxidoreductase complex subunit E from Shewanella denitrificans (strain OS217 / ATCC BAA-1090 / DSM 15013).